A 207-amino-acid chain; its full sequence is Large ribosomal subunit protein uL4 (207 aa).

Residues 57–78 (VAGGGKKPWRQKGTGRARHGSI) are disordered. Over residues 63–77 (KPWRQKGTGRARHGS) the composition is skewed to basic residues.

This sequence belongs to the universal ribosomal protein uL4 family. Part of the 50S ribosomal subunit.

In terms of biological role, one of the primary rRNA binding proteins, this protein initially binds near the 5'-end of the 23S rRNA. It is important during the early stages of 50S assembly. It makes multiple contacts with different domains of the 23S rRNA in the assembled 50S subunit and ribosome. Its function is as follows. Forms part of the polypeptide exit tunnel. The protein is Large ribosomal subunit protein uL4 of Onion yellows phytoplasma (strain OY-M).